The primary structure comprises 233 residues: ATP synthase subunit C lysine N-methyltransferase (233 aa).

An N-acetylmethionine modification is found at Met1. A helical membrane pass occupies residues 38 to 58 (FLLTGLVGGTLVAVYAVATPF). The tract at residues 56–90 (TPFVTPALRKVCLPFVPATTKQIENVVKMLRCRRG) is required for mitochondrial location.

The protein belongs to the ANT/ATPSC lysine N-methyltransferase family. In terms of tissue distribution, ubiquitously expressed.

The protein localises to the mitochondrion membrane. The enzyme catalyses L-lysyl-[protein] + 3 S-adenosyl-L-methionine = N(6),N(6),N(6)-trimethyl-L-lysyl-[protein] + 3 S-adenosyl-L-homocysteine + 3 H(+). Functionally, mitochondrial protein-lysine N-methyltransferase that trimethylates ATP synthase subunit C, ATP5MC1 and ATP5MC2. Trimethylation is required for proper incorporation of the C subunit into the ATP synthase complex and mitochondrial respiration. Promotes chronic pain. Involved in persistent inflammatory and neuropathic pain: methyltransferase activity in the mitochondria of sensory neurons promotes chronic pain via a pathway that depends on the production of reactive oxygen species (ROS) and on the engagement of spinal cord microglia. This chain is ATP synthase subunit C lysine N-methyltransferase, found in Homo sapiens (Human).